The following is a 356-amino-acid chain: Glycerol-3-phosphate dehydrogenase [NAD(P)+] (356 aa).

Trp-12, Arg-32, Arg-33, and Lys-117 together coordinate NADPH. Residues Lys-117, Gly-151, and Ser-153 each coordinate sn-glycerol 3-phosphate. An NADPH-binding site is contributed by Ala-155. Sn-glycerol 3-phosphate contacts are provided by Lys-206, Asp-265, Arg-276, and Asn-277. The Proton acceptor role is filled by Lys-206. Arg-276 is a binding site for NADPH. Residues Leu-309 and Glu-311 each contribute to the NADPH site.

It belongs to the NAD-dependent glycerol-3-phosphate dehydrogenase family.

The protein resides in the cytoplasm. The catalysed reaction is sn-glycerol 3-phosphate + NAD(+) = dihydroxyacetone phosphate + NADH + H(+). It carries out the reaction sn-glycerol 3-phosphate + NADP(+) = dihydroxyacetone phosphate + NADPH + H(+). The protein operates within membrane lipid metabolism; glycerophospholipid metabolism. Its function is as follows. Catalyzes the reduction of the glycolytic intermediate dihydroxyacetone phosphate (DHAP) to sn-glycerol 3-phosphate (G3P), the key precursor for phospholipid synthesis. This chain is Glycerol-3-phosphate dehydrogenase [NAD(P)+], found in Treponema pallidum (strain Nichols).